Consider the following 314-residue polypeptide: MSQKVKAAIIGSGNIGTDLMIKMIKYPQNMELAAVVGIDPASEGLAMARERGIATTHEGIEGLKKLPDYAEIGVVFDATSAYAHKVHDEALRADGKLVVDLTPAAIGPFTIPPVNMDEHLDATNVNMVTCGGQATIPIVAAVSQVATVHYAEIVASVSSRSAGPGTRANIDEFTRTTASAIEKVGGAAQGKAIIILNPAEPPMIMRDTVFTLSEGADEEAIRASVAAMVAKVQAYVPGYRLKQEVQFERFGDNNKLKIPGRGEFTGIKTSVFLEVEGAGDYLPSYSGNLDIMTAAAKATGELLAQRIIERRAAA.

12-15 contributes to the NAD(+) binding site; sequence SGNI. C130 functions as the Acyl-thioester intermediate in the catalytic mechanism. NAD(+)-binding positions include 161 to 169 and N288; that span reads SAGPGTRAN.

It belongs to the acetaldehyde dehydrogenase family.

The catalysed reaction is acetaldehyde + NAD(+) + CoA = acetyl-CoA + NADH + H(+). In Rhizorhabdus wittichii (strain DSM 6014 / CCUG 31198 / JCM 15750 / NBRC 105917 / EY 4224 / RW1) (Sphingomonas wittichii), this protein is Acetaldehyde dehydrogenase 1/2.